Consider the following 130-residue polypeptide: Small ribosomal subunit protein uS8 (130 aa).

Belongs to the universal ribosomal protein uS8 family.

The protein resides in the cytoplasm. The chain is Small ribosomal subunit protein uS8 (RPS15A) from Daucus carota (Wild carrot).